Reading from the N-terminus, the 296-residue chain is Polyadenylate-binding protein 2-A (296 aa).

A disordered region spans residues 1–106 (MAAVSSVASL…GELTGDQTIE (106 aa)). A compositionally biased stretch (gly residues) spans 71 to 82 (GRGGSGGGGAGG). Positions 84-97 (EELEDEELEEEEPG) are enriched in acidic residues. Positions 107–141 (DPELEAIKARVREMEEEAEKLKELQNEVEKQMNMS) form a coiled coil. The necessary for homooligomerization stretch occupies residues 146-296 (NAGPVIMSVE…ARATSWYTPY (151 aa)). The 78-residue stretch at 163 to 240 (RSIYVGNVDY…RQIKVVPKRT (78 aa)) folds into the RRM domain.

Monomer and homooligomer. Binds RNA as a monomer and oligomerizes when bound to poly(A). As to expression, shows dynamic spatial expression throughout development. First expressed in the animal pole region of the egg and this pattern persists through to the blastula stage. In gastrula and neurula embryos, expressed mainly in ectodermal, neural and epidermal regions. Neural tissue-specific expression pattern persists into tailbud stage when expression is localized to the brain and spinal cord. At early tadpole stage, expression becomes gradually confined to the specific vesicle regions of the developing brain. At stage 39, expressed in the telencephalon and mesencephalon regions of the brain. Also detected in the eye and olfactory pit at the tadpole stage. Expressed during gut endoderm development. At stage 35, expressed exclusively in the anterior portion of the gut endoderm, which includes the prospective liver, stomach and pancreas. As development proceeds, expression becomes restricted to the pancreas, and by stage 46/47 (the seventh day of development) expression is localized exclusively to the pancreas. Expressed in most adult tissues.

Its subcellular location is the nucleus. It localises to the cytoplasm. Its function is as follows. Involved in the 3'-end formation of mRNA precursors (pre-mRNA) by the addition of a poly(A) tail of 200-250 nt to the upstream cleavage product. Stimulates poly(A) polymerase (PAPOLA) conferring processivity on the poly(A) tail elongation reaction and also controls the poly(A) tail length. Increases the affinity of poly(A) polymerase for RNA. Binds to poly(A) and to poly(G) with high affinity. May protect the poly(A) tail from degradation. This chain is Polyadenylate-binding protein 2-A (pabpn1-a), found in Xenopus laevis (African clawed frog).